The primary structure comprises 223 residues: Deoxyribose-phosphate aldolase (223 aa).

Asp89 acts as the Proton donor/acceptor in catalysis. Catalysis depends on Lys152, which acts as the Schiff-base intermediate with acetaldehyde. The Proton donor/acceptor role is filled by Lys181.

The protein belongs to the DeoC/FbaB aldolase family. DeoC type 1 subfamily.

It is found in the cytoplasm. It catalyses the reaction 2-deoxy-D-ribose 5-phosphate = D-glyceraldehyde 3-phosphate + acetaldehyde. It participates in carbohydrate degradation; 2-deoxy-D-ribose 1-phosphate degradation; D-glyceraldehyde 3-phosphate and acetaldehyde from 2-deoxy-alpha-D-ribose 1-phosphate: step 2/2. Functionally, catalyzes a reversible aldol reaction between acetaldehyde and D-glyceraldehyde 3-phosphate to generate 2-deoxy-D-ribose 5-phosphate. The polypeptide is Deoxyribose-phosphate aldolase (Bacillus cereus (strain ATCC 14579 / DSM 31 / CCUG 7414 / JCM 2152 / NBRC 15305 / NCIMB 9373 / NCTC 2599 / NRRL B-3711)).